The chain runs to 301 residues: Homoserine kinase (301 aa).

Residue Lys-89–Ala-99 participates in ATP binding.

This sequence belongs to the GHMP kinase family. Homoserine kinase subfamily.

The protein localises to the cytoplasm. It carries out the reaction L-homoserine + ATP = O-phospho-L-homoserine + ADP + H(+). It functions in the pathway amino-acid biosynthesis; L-threonine biosynthesis; L-threonine from L-aspartate: step 4/5. Functionally, catalyzes the ATP-dependent phosphorylation of L-homoserine to L-homoserine phosphate. This is Homoserine kinase from Methanococcus maripaludis (strain C5 / ATCC BAA-1333).